Reading from the N-terminus, the 157-residue chain is Ribosome maturation factor RimP (157 aa).

Belongs to the RimP family.

It localises to the cytoplasm. Its function is as follows. Required for maturation of 30S ribosomal subunits. This is Ribosome maturation factor RimP from Limosilactobacillus reuteri (strain DSM 20016) (Lactobacillus reuteri).